The chain runs to 477 residues: Bifunctional protein HldE (477 aa).

The interval 1–318 (MKVTLPEFER…ENAVRGRADT (318 aa)) is ribokinase. 195–198 (NLSE) contacts ATP. D264 is a catalytic residue. Residues 344–477 (MTNGVFDILH…IKKIQKDSDK (134 aa)) form a cytidylyltransferase region.

The protein in the N-terminal section; belongs to the carbohydrate kinase PfkB family. It in the C-terminal section; belongs to the cytidylyltransferase family. In terms of assembly, homodimer.

It catalyses the reaction D-glycero-beta-D-manno-heptose 7-phosphate + ATP = D-glycero-beta-D-manno-heptose 1,7-bisphosphate + ADP + H(+). The enzyme catalyses D-glycero-beta-D-manno-heptose 1-phosphate + ATP + H(+) = ADP-D-glycero-beta-D-manno-heptose + diphosphate. It functions in the pathway nucleotide-sugar biosynthesis; ADP-L-glycero-beta-D-manno-heptose biosynthesis; ADP-L-glycero-beta-D-manno-heptose from D-glycero-beta-D-manno-heptose 7-phosphate: step 1/4. It participates in nucleotide-sugar biosynthesis; ADP-L-glycero-beta-D-manno-heptose biosynthesis; ADP-L-glycero-beta-D-manno-heptose from D-glycero-beta-D-manno-heptose 7-phosphate: step 3/4. Functionally, catalyzes the phosphorylation of D-glycero-D-manno-heptose 7-phosphate at the C-1 position to selectively form D-glycero-beta-D-manno-heptose-1,7-bisphosphate. Catalyzes the ADP transfer from ATP to D-glycero-beta-D-manno-heptose 1-phosphate, yielding ADP-D-glycero-beta-D-manno-heptose. This is Bifunctional protein HldE from Citrobacter koseri (strain ATCC BAA-895 / CDC 4225-83 / SGSC4696).